A 99-amino-acid chain; its full sequence is Protein Frey (99 aa).

The helical transmembrane segment at 10-29 (YPRAGLSLFLFYLILAGALL) threads the bilayer. Residues 60–90 (DYGLRPKHPRPGGPRPLLSQAQQRKRDGPNM) form a disordered region.

In terms of assembly, interacts with SPPL2C (via active sites); the interaction stabilizes FREY1 protein and inhibits SPPL2C proteolytic activity. Interacts with IZUMO1; the interaction retains IZUMO1 at the endoplasmic reticulum membrane and coordinates IZUMO1 complex assembly. As to expression, expressed in round spermatids (at protein level).

It is found in the endoplasmic reticulum membrane. In terms of biological role, key regulator for male fertility expressed transiently in round spermatids where it recruits IZUMO1 at the endoplasmic reticulum (ER) membrane and coordinates the oolemmal binding multimeric complex (IZUMO1 complex) assembly. Upon complete assembly of the IZUMO1 complex, its ER retention is released, facilitating IZUMO1 complex export to the acrosome. Through the interaction with SPPL2C, inhibits its intramembrane protease activity directly accessing the catalytic center of an I-CLiP. In Mus musculus (Mouse), this protein is Protein Frey.